We begin with the raw amino-acid sequence, 311 residues long: Putative ribose-phosphate pyrophosphokinase 2 (311 aa).

ATP-binding positions include 38–40 (DGE) and 97–98 (RQ). Mg(2+)-binding residues include His131 and Asp171. Asp219 lines the D-ribose 5-phosphate pocket.

This sequence belongs to the ribose-phosphate pyrophosphokinase family. Class I subfamily. Homohexamer. Mg(2+) serves as cofactor.

Its subcellular location is the cytoplasm. It catalyses the reaction D-ribose 5-phosphate + ATP = 5-phospho-alpha-D-ribose 1-diphosphate + AMP + H(+). It functions in the pathway metabolic intermediate biosynthesis; 5-phospho-alpha-D-ribose 1-diphosphate biosynthesis; 5-phospho-alpha-D-ribose 1-diphosphate from D-ribose 5-phosphate (route I): step 1/1. Involved in the biosynthesis of the central metabolite phospho-alpha-D-ribosyl-1-pyrophosphate (PRPP) via the transfer of pyrophosphoryl group from ATP to 1-hydroxyl of ribose-5-phosphate (Rib-5-P). This is Putative ribose-phosphate pyrophosphokinase 2 from Listeria monocytogenes serotype 4b (strain F2365).